A 118-amino-acid chain; its full sequence is Small ribosomal subunit protein uS13 (118 aa).

Residues glycine 94–serine 118 form a disordered region.

Belongs to the universal ribosomal protein uS13 family. As to quaternary structure, part of the 30S ribosomal subunit. Forms a loose heterodimer with protein S19. Forms two bridges to the 50S subunit in the 70S ribosome.

In terms of biological role, located at the top of the head of the 30S subunit, it contacts several helices of the 16S rRNA. In the 70S ribosome it contacts the 23S rRNA (bridge B1a) and protein L5 of the 50S subunit (bridge B1b), connecting the 2 subunits; these bridges are implicated in subunit movement. Contacts the tRNAs in the A and P-sites. In Legionella pneumophila (strain Paris), this protein is Small ribosomal subunit protein uS13.